Here is a 589-residue protein sequence, read N- to C-terminus: LRR receptor-like serine/threonine-protein kinase FEI 2 (589 aa).

The N-terminal stretch at 1 to 28 (MGICLMKRCCSWFLLISFLSALTNENEA) is a signal peptide. Residues 29 to 236 (ISPDGEALLS…TGQGGNNPKR (208 aa)) lie on the Extracellular side of the membrane. LRR repeat units follow at residues 72–96 (TKRVIALSLTYHKLRGPLPPELGKL), 97–120 (DQLRLLMLHNNALYQSIPASLGNC), 122–144 (ALEGIYLQNNYITGTIPSEIGNL), 145–168 (SGLKNLDLSNNNLNGAIPASLGQL), and 170–193 (RLTKFNVSNNFLVGKIPSDGLLAR). 2 N-linked (GlcNAc...) asparagine glycosylation sites follow: asparagine 119 and asparagine 143. 3 N-linked (GlcNAc...) asparagine glycosylation sites follow: asparagine 175, asparagine 215, and asparagine 219. Residues 237–257 (LLISASATVGGLLLVALMCFW) form a helical membrane-spanning segment. Over 258–589 (GCFLYKKLGR…PSDFYDSSSD (332 aa)) the chain is Cytoplasmic. A Protein kinase domain is found at 304–576 (LNEEHIIGCG…VVQLLESEVM (273 aa)). Residues 310 to 318 (IGCGGFGTV) and lysine 332 each bind ATP. A Phosphoserine modification is found at serine 384. Aspartate 427 (proton acceptor) is an active-site residue. Phosphothreonine occurs at positions 460, 461, and 466. The residue at position 474 (tyrosine 474) is a Phosphotyrosine.

This sequence belongs to the protein kinase superfamily. Ser/Thr protein kinase family. Interacts with the ACC synthases ACS5 and ACS9 but not ACS2, via the kinase domain. In terms of processing, autophosphorylated. Expressed in the root meristem and elongation zone, and in hypocotyls of etiolated seedlings.

Its subcellular location is the cell membrane. The catalysed reaction is L-seryl-[protein] + ATP = O-phospho-L-seryl-[protein] + ADP + H(+). The enzyme catalyses L-threonyl-[protein] + ATP = O-phospho-L-threonyl-[protein] + ADP + H(+). Functionally, involved in the signaling pathway that regulates cell wall function, including cellulose biosynthesis, likely via an 1-aminocyclopropane-1-carboxylic acid (ACC)-mediated signal (a precursor of ethylene). In Arabidopsis thaliana (Mouse-ear cress), this protein is LRR receptor-like serine/threonine-protein kinase FEI 2 (FEI2).